Reading from the N-terminus, the 710-residue chain is Amyloid beta precursor protein binding family B member 1 (710 aa).

Residues 1–15 (MSVPSSLSQSAINAN) are compositionally biased toward polar residues. Disordered regions lie at residues 1–24 (MSVP…ALSL), 131–254 (GLRG…TDSD), 276–299 (GTTQ…EESQ), and 340–365 (TFPA…NTNP). Residues 145–173 (GPDEGEEKAAGEAEEEEEDDDDEEEEEDL) are compositionally biased toward acidic residues. At lysine 204 the chain carries N6-acetyllysine. Polar residues predominate over residues 223 to 234 (SWATLSQGSPSY). Positions 253 to 285 (SDLPAGWMRVQDTSGTYYWHIPTGTTQWEPPGR) constitute a WW domain. Low complexity predominate over residues 287 to 299 (SPSQGSSPQEESQ). A PID 1 domain is found at 370–509 (FAVRSLGWVE…SKIMAERRNA (140 aa)). Serine 459 carries the phosphoserine; by PKC modification. Serine 517 bears the Phosphoserine mark. In terms of domain architecture, PID 2 spans 542-699 (KFQVYYLGNV…RRGVQSLWGS (158 aa)). At tyrosine 547 the chain carries Phosphotyrosine; by ABL1. Serine 610 bears the Phosphoserine; by SGK1 mark. Lysine 701 carries the N6-acetyllysine modification.

As to quaternary structure, component of a complex, at least composed of APBB1, RASD1/DEXRAS1 and APP. Interacts (via PID domain 2) with APP (with the intracellular domain of the amyloid-beta precursor protein). Interacts (via PID domain 2) with RASD1/DEXRAS1; impairs the transcription activation activity. Interacts (via PID domain 1) with KAT5/TIP60. Interacts (via the WW domain) with the proline-rich region of APBB1IP. Interacts with TSHZ1 and TSHZ2. Interacts (via the WW domain) with histone H2AX (when phosphorylated on 'Tyr-142') and the proline-rich region of ENAH. Interacts with MAPK8. Interacts (via PID domain 1) with TSHZ3 (via homeobox domain). Interacts with SET. Found in a trimeric complex with HDAC1 and TSHZ3; the interaction between HDAC1 and APBB1 is mediated by TSHZ3. Interacts (via WWW domain) with NEK6. Interacts (via WWW domain) with ABL1. Interacts with RNF157. Interacts with ARF6. In terms of processing, phosphorylation at Ser-610 by SGK1 promotes its localization to the nucleus. Phosphorylated following nuclear translocation. Phosphorylation at Tyr-547 by ABL1 enhances transcriptional activation activity and reduces the affinity for RASD1/DEXRAS1. Phosphorylated at Ser-459 by PKC upon insulin activation. Post-translationally, acetylation at Lys-204 and Lys-701 by KAT5 promotes its transcription activator activity. Polyubiquitination by RNF157 leads to degradation by the proteasome. In terms of tissue distribution, highly expressed in brain; strongly reduced in post-mortem elderly subjects with Alzheimer disease. As to expression, expressed preferentially in the brain.

The protein localises to the cell membrane. The protein resides in the cytoplasm. It is found in the nucleus. Its subcellular location is the cell projection. It localises to the growth cone. The protein localises to the nucleus speckle. In terms of biological role, transcription coregulator that can have both coactivator and corepressor functions. Adapter protein that forms a transcriptionally active complex with the gamma-secretase-derived amyloid precursor protein (APP) intracellular domain. Plays a central role in the response to DNA damage by translocating to the nucleus and inducing apoptosis. May act by specifically recognizing and binding histone H2AX phosphorylated on 'Tyr-142' (H2AXY142ph) at double-strand breaks (DSBs), recruiting other pro-apoptosis factors such as MAPK8/JNK1. Required for histone H4 acetylation at double-strand breaks (DSBs). Its ability to specifically bind modified histones and chromatin modifying enzymes such as KAT5/TIP60, probably explains its transcription activation activity. Functions in association with TSHZ3, SET and HDAC factors as a transcriptional repressor, that inhibits the expression of CASP4. Associates with chromatin in a region surrounding the CASP4 transcriptional start site(s). Involved in hippocampal neurite branching and neuromuscular junction formation, as a result plays a role in spatial memory functioning. Plays a role in the maintenance of lens transparency. May play a role in muscle cell strength. Acts as a molecular adapter that functions in neurite outgrowth by activating the RAC1-ARF6 axis upon insulin treatment. The protein is Amyloid beta precursor protein binding family B member 1 of Homo sapiens (Human).